We begin with the raw amino-acid sequence, 930 residues long: SCY1-like protein 2 (930 aa).

One can recognise a Protein kinase domain in the interval 32–327 (FDVGRHIASG…ADQMTKIPFF (296 aa)). An HEAT repeat occupies 443 to 479 (DEIKNSVLPMVYRALEAPSIQIQELCLNIIPTFANLI). Phosphoserine is present on residues serine 658 and serine 677. The tract at residues 658–706 (SGSESENREDGMQGKQKRGSLTLEEKQKLAKEQEQAQKLKSQQPLKPQV) is disordered. The segment covering 680–694 (LEEKQKLAKEQEQAQ) has biased composition (basic and acidic residues). Residues 695-705 (KLKSQQPLKPQ) show a composition bias toward low complexity. Threonine 708 bears the Phosphothreonine mark. Residues 895–930 (GMQGNPFFNPQNFAQPPPTTMTSSSSASNDLKDLFG) are disordered. The segment covering 897-922 (QGNPFFNPQNFAQPPPTTMTSSSSAS) has biased composition (low complexity).

The protein belongs to the protein kinase superfamily. Interacts with clathrin and AP2B1; the interaction mediates the association with the AP-2 complex. In terms of processing, could autophosphorylate in presence of poly-L-lysine. Ubiquitously expressed.

The protein resides in the cytoplasmic vesicle. It localises to the clathrin-coated vesicle. The protein localises to the golgi apparatus. Its subcellular location is the trans-Golgi network membrane. It is found in the endosome membrane. Component of the AP2-containing clathrin coat that may regulate clathrin-dependent trafficking at plasma membrane, TGN and endosomal system. A possible serine/threonine-protein kinase toward the beta2-subunit of the plasma membrane adapter complex AP2 and other proteins in presence of poly-L-lysine has not been confirmed. By regulating the expression of excitatory receptors at synapses, plays an essential role in neuronal function and signaling and in brain development. The chain is SCY1-like protein 2 from Mus musculus (Mouse).